The following is a 564-amino-acid chain: Rhodopsin kinase GRK1 (564 aa).

The interaction with RCVRN stretch occupies residues 1–15 (MDFGSLETVVANSAF). The N-terminal stretch occupies residues 1 to 189 (MDFGSLETVV…LEAQPIGEDW (189 aa)). Ser-5 is subject to Phosphoserine. Thr-8 carries the phosphothreonine modification. Ser-21 is modified (phosphoserine; by PKA and autocatalysis). In terms of domain architecture, RGS spans 58–175 (FDNLCSEQPI…LGSLYFLRFL (118 aa)). The region spanning 190 to 455 (FLDFRVLGKG…CDALRANVLF (266 aa)) is the Protein kinase domain. ATP-binding positions include 196–204 (LGKGGFGEV) and Lys-219. Asp-317 (proton acceptor) is an active-site residue. An AGC-kinase C-terminal domain is found at 456–521 (KDISWRQLEA…GNCSIPWQEE (66 aa)). Positions 456–564 (KDISWRQLEA…TAKSGMCLIS (109 aa)) are C-terminal. Ser-491 carries the phosphoserine; by autocatalysis modification. Thr-492 carries the post-translational modification Phosphothreonine; by autocatalysis. Cysteine methyl ester is present on Cys-561. A lipid anchor (S-farnesyl cysteine) is attached at Cys-561. Residues 562 to 564 (LIS) constitute a propeptide, removed in mature form.

It belongs to the protein kinase superfamily. AGC Ser/Thr protein kinase family. GPRK subfamily. Interacts (via N-terminus) with RCVRN (via C-terminus); the interaction is Ca(2+)-dependent. Interacts (when prenylated) with PDE6D; this promotes release from membranes. May form a complex composed of RHO, GRK1 and RCVRN in a Ca(2+)-dependent manner; RCVRN prevents the interaction between GRK1 and RHO. Post-translationally, autophosphorylated, Ser-21 is a minor site of autophosphorylation compared to Ser-491 and Thr-492. Phosphorylation at Ser-21 is regulated by light and activated by cAMP. Farnesylation is required for full activity. As to expression, detected in retina (at protein level). Retina-specific. Expressed in rod and cone photoreceptor cells.

It is found in the membrane. The protein localises to the cell projection. It localises to the cilium. Its subcellular location is the photoreceptor outer segment. It catalyses the reaction L-threonyl-[rhodopsin] + ATP = O-phospho-L-threonyl-[rhodopsin] + ADP + H(+). It carries out the reaction L-seryl-[rhodopsin] + ATP = O-phospho-L-seryl-[rhodopsin] + ADP + H(+). Inhibited by RCVRN, which prevents the interaction between GRK1 and RHO. Inhibition is calcium-dependent. Its function is as follows. Retina-specific kinase involved in the signal turnoff via phosphorylation of rhodopsin (RHO), the G protein- coupled receptor that initiates the phototransduction cascade. This rapid desensitization is essential for scotopic vision and permits rapid adaptation to changes in illumination. May play a role in the maintenance of the outer nuclear layer in the retina. This chain is Rhodopsin kinase GRK1, found in Rattus norvegicus (Rat).